A 349-amino-acid polypeptide reads, in one-letter code: Isopentenyl-diphosphate delta-isomerase (349 aa).

Residue 6–7 (RK) participates in substrate binding. FMN contacts are provided by residues 62–64 (AMT), serine 93, and asparagine 122. Glutamine 152 contacts substrate. Glutamate 153 contributes to the Mg(2+) binding site. Residues lysine 184, threonine 214, 258–259 (GG), and 280–281 (AG) each bind FMN.

The protein belongs to the IPP isomerase type 2 family. In terms of assembly, homooctamer. Dimer of tetramers. FMN serves as cofactor. NADPH is required as a cofactor. It depends on Mg(2+) as a cofactor.

Its subcellular location is the cytoplasm. It catalyses the reaction isopentenyl diphosphate = dimethylallyl diphosphate. Its function is as follows. Involved in the biosynthesis of isoprenoids. Catalyzes the 1,3-allylic rearrangement of the homoallylic substrate isopentenyl (IPP) to its allylic isomer, dimethylallyl diphosphate (DMAPP). The chain is Isopentenyl-diphosphate delta-isomerase from Bacillus anthracis (strain A0248).